The primary structure comprises 133 residues: Large ribosomal subunit protein bL19 (133 aa).

This sequence belongs to the bacterial ribosomal protein bL19 family.

This protein is located at the 30S-50S ribosomal subunit interface and may play a role in the structure and function of the aminoacyl-tRNA binding site. This chain is Large ribosomal subunit protein bL19, found in Stenotrophomonas maltophilia (strain R551-3).